The following is a 229-amino-acid chain: ATP synthase subunit a (229 aa).

Transmembrane regions (helical) follow at residues 25–45 (VHIIYTWVVMALLITLGVLGA), 58–75 (FLEVLISGIEEFMVSVTG), 81–101 (FFPLAGTIAIFIAVSNLIGLV), 110–130 (SINTPLACAIVVFVFTHFIGI), 141–161 (FLGPVWWLAPLIFPIEIIGHL), 175–195 (MMGHESVLVILFMLGGAFFAP), and 196–216 (LPIMALGIFVAFVQAFVFFLL).

Belongs to the ATPase A chain family. In terms of assembly, F-type ATPases have 2 components, CF(1) - the catalytic core - and CF(0) - the membrane proton channel. CF(1) has five subunits: alpha(3), beta(3), gamma(1), delta(1), epsilon(1). CF(0) has three main subunits: a(1), b(2) and c(9-12). The alpha and beta chains form an alternating ring which encloses part of the gamma chain. CF(1) is attached to CF(0) by a central stalk formed by the gamma and epsilon chains, while a peripheral stalk is formed by the delta and b chains.

Its subcellular location is the cell inner membrane. Key component of the proton channel; it plays a direct role in the translocation of protons across the membrane. This is ATP synthase subunit a from Desulfosudis oleivorans (strain DSM 6200 / JCM 39069 / Hxd3) (Desulfococcus oleovorans).